We begin with the raw amino-acid sequence, 317 residues long: Acetyl-coenzyme A carboxylase carboxyl transferase subunit alpha (317 aa).

Positions 33–294 (NLDDEIARLQ…KQRLLDDLKE (262 aa)) constitute a CoA carboxyltransferase C-terminal domain.

Belongs to the AccA family. As to quaternary structure, acetyl-CoA carboxylase is a heterohexamer composed of biotin carboxyl carrier protein (AccB), biotin carboxylase (AccC) and two subunits each of ACCase subunit alpha (AccA) and ACCase subunit beta (AccD).

Its subcellular location is the cytoplasm. The catalysed reaction is N(6)-carboxybiotinyl-L-lysyl-[protein] + acetyl-CoA = N(6)-biotinyl-L-lysyl-[protein] + malonyl-CoA. The protein operates within lipid metabolism; malonyl-CoA biosynthesis; malonyl-CoA from acetyl-CoA: step 1/1. Functionally, component of the acetyl coenzyme A carboxylase (ACC) complex. First, biotin carboxylase catalyzes the carboxylation of biotin on its carrier protein (BCCP) and then the CO(2) group is transferred by the carboxyltransferase to acetyl-CoA to form malonyl-CoA. The chain is Acetyl-coenzyme A carboxylase carboxyl transferase subunit alpha from Pasteurella multocida (strain Pm70).